The sequence spans 142 residues: Large ribosomal subunit protein uL13 (142 aa).

This sequence belongs to the universal ribosomal protein uL13 family. Part of the 50S ribosomal subunit.

Its function is as follows. This protein is one of the early assembly proteins of the 50S ribosomal subunit, although it is not seen to bind rRNA by itself. It is important during the early stages of 50S assembly. The polypeptide is Large ribosomal subunit protein uL13 (Akkermansia muciniphila (strain ATCC BAA-835 / DSM 22959 / JCM 33894 / BCRC 81048 / CCUG 64013 / CIP 107961 / Muc)).